The sequence spans 165 residues: 3-isopropylmalate dehydratase small subunit (165 aa).

The protein belongs to the LeuD family. LeuD type 2 subfamily. In terms of assembly, heterodimer of LeuC and LeuD.

The catalysed reaction is (2R,3S)-3-isopropylmalate = (2S)-2-isopropylmalate. Its pathway is amino-acid biosynthesis; L-leucine biosynthesis; L-leucine from 3-methyl-2-oxobutanoate: step 2/4. Its function is as follows. Catalyzes the isomerization between 2-isopropylmalate and 3-isopropylmalate, via the formation of 2-isopropylmaleate. In Saccharolobus islandicus (strain M.16.27) (Sulfolobus islandicus), this protein is 3-isopropylmalate dehydratase small subunit.